We begin with the raw amino-acid sequence, 80 residues long: Protein FAM229B (80 aa).

Residues 1 to 45 (MPFRFGTQPRRFPVEGGDSSIELESGLSSSASCNGKETSPNRQLR) form a disordered region. Over residues 15 to 32 (EGGDSSIELESGLSSSAS) the composition is skewed to low complexity. Residues 33-42 (CNGKETSPNR) are compositionally biased toward polar residues.

It belongs to the FAM229 family.

The polypeptide is Protein FAM229B (Fam229b) (Rattus norvegicus (Rat)).